The sequence spans 590 residues: Leucine-rich repeat transmembrane neuronal protein 4 (590 aa).

A signal peptide spans 1–30 (MGFRLITQLKGMSVLLVLFPTLLLVMLTGA). In terms of domain architecture, LRRNT spans 31–59 (QRACPKNCRCDGKIVYCESHAFADIPENI). Topologically, residues 31 to 424 (QRACPKNCRC…HEYEHVSFHK (394 aa)) are extracellular. N-linked (GlcNAc...) asparagine glycosylation is present at asparagine 58. LRR repeat units follow at residues 60 to 83 (SGGS…QFAG), 84 to 107 (LNQL…AFQG), 108 to 131 (IRRL…TFHP), 132 to 155 (VPNL…QFKG), 157 to 179 (RKLI…VFQD), 180 to 203 (CRNL…AFAG), 205 to 227 (LKLK…HFPR), 228 to 251 (LFNL…LTWT), 252 to 275 (WSSL…TFKC), and 276 to 299 (LPNL…TVNA). Asparagine 126 carries N-linked (GlcNAc...) asparagine glycosylation. Asparagine 291 is a glycosylation site (N-linked (GlcNAc...) asparagine). An LRRCT domain is found at 311–362 (NMWECSRSICPLFYWLKNFKGNKESTMICAGPKHIQGEKVSDAVETYNICSD). A helical transmembrane segment spans residues 425-445 (IIAGSVALFLSVAMILLVIYV). Residues 446 to 590 (SWKRYPASMK…PAIYLERITN (145 aa)) are Cytoplasmic-facing.

This sequence belongs to the LRRTM family. Peripherally associated with AMPAR complex. AMPAR complex consists of an inner core made of 4 pore-forming GluA/GRIA proteins (GRIA1, GRIA2, GRIA3 and GRIA4) and 4 major auxiliary subunits arranged in a twofold symmetry. One of the two pairs of distinct binding sites is occupied either by CNIH2, CNIH3 or CACNG2, CACNG3. The other harbors CACNG2, CACNG3, CACNG4, CACNG8 or GSG1L. This inner core of AMPAR complex is complemented by outer core constituents binding directly to the GluA/GRIA proteins at sites distinct from the interaction sites of the inner core constituents. Outer core constituents include at least PRRT1, PRRT2, CKAMP44/SHISA9, FRRS1L and NRN1. The proteins of the inner and outer core serve as a platform for other, more peripherally associated AMPAR constituents, including LRRTM4. Alone or in combination, these auxiliary subunits control the gating and pharmacology of the AMPAR complex and profoundly impact their biogenesis and protein processing. In terms of tissue distribution, expressed in the brain (at protein level).

It is found in the cell membrane. The protein localises to the postsynaptic cell membrane. In terms of biological role, may play a role in the development and maintenance of the nervous system. Exhibits strong synaptogenic activity, restricted to excitatory presynaptic differentiation. This Rattus norvegicus (Rat) protein is Leucine-rich repeat transmembrane neuronal protein 4 (Lrrtm4).